Consider the following 59-residue polypeptide: Alpha-like toxin CsEv5 (59 aa).

The LCN-type CS-alpha/beta domain occupies 1-59; it reads KDGYPVDSKGCKLSCVANNYCDNQCKMKKASGGHCYAMSCYCEGLPENAKVSDSATNIC. Cystine bridges form between cysteine 11–cysteine 59, cysteine 15–cysteine 35, cysteine 21–cysteine 40, and cysteine 25–cysteine 42.

Belongs to the long (4 C-C) scorpion toxin superfamily. Sodium channel inhibitor family. In terms of tissue distribution, expressed by the venom gland.

The protein resides in the secreted. Binds voltage-independently sodium channels (Nav) and inhibits the inactivation of the activated channels, thereby blocking neuronal transmission. Is highly toxic to insects and barely toxic to mammals. As it does not compete with the classical alpha-toxin AaH2, this toxin is considered as an alpha-like toxin. The chain is Alpha-like toxin CsEv5 from Centruroides sculpturatus (Arizona bark scorpion).